The sequence spans 257 residues: Zinc uptake system ATP-binding protein ZurA (257 aa).

The 237-residue stretch at 5–241 folds into the ABC transporter domain; it reads IEVNNVSYHY…ADRELEILAE (237 aa). Residue 37 to 44 participates in ATP binding; it reads GPNGSGKS.

Belongs to the ABC transporter superfamily.

Its function is as follows. Involved in a zinc uptake transport system. In Listeria innocua serovar 6a (strain ATCC BAA-680 / CLIP 11262), this protein is Zinc uptake system ATP-binding protein ZurA (zurA).